Here is a 155-residue protein sequence, read N- to C-terminus: Cyanate hydratase (155 aa).

Catalysis depends on residues Arg95, Glu98, and Ser121.

It belongs to the cyanase family.

The enzyme catalyses cyanate + hydrogencarbonate + 3 H(+) = NH4(+) + 2 CO2. Its function is as follows. Catalyzes the reaction of cyanate with bicarbonate to produce ammonia and carbon dioxide. The chain is Cyanate hydratase from Pseudomonas syringae pv. syringae (strain B728a).